The primary structure comprises 454 residues: uncharacterized protein (454 aa).

4 residues coordinate [4Fe-4S] cluster: cysteine 73, cysteine 79, cysteine 82, and cysteine 154. Residues glutamine 279, phenylalanine 307, aspartate 328, and aspartate 381 each coordinate S-adenosyl-L-methionine. Cysteine 408 (nucleophile) is an active-site residue.

This sequence belongs to the class I-like SAM-binding methyltransferase superfamily. RNA M5U methyltransferase family.

This is an uncharacterized protein from Leptospira interrogans serogroup Icterohaemorrhagiae serovar copenhageni (strain Fiocruz L1-130).